We begin with the raw amino-acid sequence, 237 residues long: Ribitol-5-phosphate cytidylyltransferase (237 aa).

Residues 7–10 (LAGG) and 80–86 (GEDRNET) each bind CTP.

It belongs to the IspD/TarI cytidylyltransferase family. TarI subfamily.

The enzyme catalyses D-ribitol 5-phosphate + CTP + H(+) = CDP-L-ribitol + diphosphate. The protein operates within cell wall biogenesis; poly(ribitol phosphate) teichoic acid biosynthesis. Catalyzes the transfer of the cytidylyl group of CTP to D-ribitol 5-phosphate. The chain is Ribitol-5-phosphate cytidylyltransferase from Listeria innocua serovar 6a (strain ATCC BAA-680 / CLIP 11262).